We begin with the raw amino-acid sequence, 106 residues long: uncharacterized protein (106 aa).

Residues 1–93 (MSIFYVLGKK…WEAKWKEAKI (93 aa)) form the HTH hxlR-type domain.

This is an uncharacterized protein from Methanocaldococcus jannaschii (strain ATCC 43067 / DSM 2661 / JAL-1 / JCM 10045 / NBRC 100440) (Methanococcus jannaschii).